Here is a 234-residue protein sequence, read N- to C-terminus: Uridylate kinase (234 aa).

Residue 9-12 participates in ATP binding; the sequence is KLSG. G51 is a UMP binding site. Residues G52 and R56 each coordinate ATP. Residues D71 and 132-139 each bind UMP; that span reads CGNPFFTT. ATP contacts are provided by T159, Y165, and D168.

The protein belongs to the UMP kinase family. In terms of assembly, homohexamer.

The protein localises to the cytoplasm. The enzyme catalyses UMP + ATP = UDP + ADP. It functions in the pathway pyrimidine metabolism; CTP biosynthesis via de novo pathway; UDP from UMP (UMPK route): step 1/1. With respect to regulation, inhibited by UTP. Its function is as follows. Catalyzes the reversible phosphorylation of UMP to UDP. The chain is Uridylate kinase from Prochlorococcus marinus (strain MIT 9301).